Consider the following 128-residue polypeptide: L-ectoine synthase (128 aa).

It belongs to the ectoine synthase family.

The enzyme catalyses (2S)-4-acetamido-2-aminobutanoate = L-ectoine + H2O. The protein operates within amine and polyamine biosynthesis; ectoine biosynthesis; L-ectoine from L-aspartate 4-semialdehyde: step 3/3. Its function is as follows. Catalyzes the circularization of gamma-N-acetyl-alpha,gamma-diaminobutyric acid (ADABA) to ectoine (1,4,5,6-tetrahydro-2-methyl-4-pyrimidine carboxylic acid), which is an excellent osmoprotectant. This Aliivibrio fischeri (strain ATCC 700601 / ES114) (Vibrio fischeri) protein is L-ectoine synthase.